Consider the following 1059-residue polypeptide: Transmembrane protease serine 9 (1059 aa).

Topologically, residues 1 to 29 (MEPTVADVHLVPRTTKEVPALDAACCRAA) are cytoplasmic. Residues 30 to 50 (SIGVVATSLVVLTLGVLLAFL) form a helical; Signal-anchor for type II membrane protein membrane-spanning segment. Residues 51 to 1059 (STQGFHVDHT…RGWIGQHIQE (1009 aa)) lie on the Extracellular side of the membrane. Positions 153 to 190 (RCPGNSFSCGNSQCVTKVNPECDDQEDCSDGSDEAHCE) constitute an LDL-receptor class A domain. Intrachain disulfides connect cysteine 154–cysteine 166, cysteine 161–cysteine 180, cysteine 174–cysteine 189, and cysteine 228–cysteine 244. One can recognise a Peptidase S1 1 domain in the interval 203–436 (IVGGMEASPG…LRDWILEATT (234 aa)). Residues histidine 243 and aspartate 292 each act as charge relay system in the active site. 3 disulfides stabilise this stretch: cysteine 326–cysteine 393, cysteine 358–cysteine 372, and cysteine 383–cysteine 412. Serine 387 serves as the catalytic Charge relay system. The disordered stretch occupies residues 443 to 469 (APTMAPAPAAPSTAWPTSPESPVVSTP). The Peptidase S1 2 domain occupies 504–736 (VVGGFGAASG…LKGWILEIMS (233 aa)). Residues cysteine 529 and cysteine 545 are joined by a disulfide bond. Histidine 544 acts as the Charge relay system in catalysis. N-linked (GlcNAc...) asparagine glycosylation occurs at asparagine 547. Residue aspartate 592 is the Charge relay system of the active site. 3 cysteine pairs are disulfide-bonded: cysteine 626/cysteine 693, cysteine 658/cysteine 672, and cysteine 683/cysteine 712. Residues asparagine 638 and asparagine 663 are each glycosylated (N-linked (GlcNAc...) asparagine). Serine 687 acts as the Charge relay system in catalysis. The tract at residues 758–814 (TTAGLTVPGATPSRPTPGAASRVTGQPANSTLSAVSTTARGQTPFPDAPEATTHTQL) is disordered. Residues 780–798 (VTGQPANSTLSAVSTTARG) are compositionally biased toward polar residues. Residue asparagine 786 is glycosylated (N-linked (GlcNAc...) asparagine). Positions 827 to 1058 (IVGGSAAGRG…VRGWIGQHIQ (232 aa)) constitute a Peptidase S1 3 domain. Intrachain disulfides connect cysteine 853/cysteine 869, cysteine 949/cysteine 1015, cysteine 980/cysteine 994, and cysteine 1005/cysteine 1034.

Belongs to the peptidase S1 family. Post-translationally, proteolytically cleaved to generate 3 independent serine protease chains. The cleaved chains may remain attached to the membrane thanks to disulfide bonds. It is unclear whether cleavage always takes place. As to expression, expressed in fetal human tissues, such as kidney, liver, lung and brain, and in a variety of tumor cell lines. Weakly expressed in adult tissues including skeletal muscle, liver, placenta and heart.

The protein localises to the cell membrane. Its activity is regulated as follows. Inhibited by serine protease inhibitors PMSF and 4-(2-aminoethyl)benzenesulfonyl fluoride, but not by EDTA. Its function is as follows. Serase-1 and serase-2 are serine proteases that hydrolyze the peptides N-t-Boc-Gln-Ala-Arg-AMC and N-t-Boc-Gln-Gly-Arg-AMC. In contrast, N-t-Boc-Ala-Phe-Lys-AMC and N-t-Boc-Ala-Pro-Ala-AMC are not significantly hydrolyzed. This is Transmembrane protease serine 9 (TMPRSS9) from Homo sapiens (Human).